We begin with the raw amino-acid sequence, 235 residues long: Ubiquinone/menaquinone biosynthesis C-methyltransferase UbiE (235 aa).

S-adenosyl-L-methionine contacts are provided by residues threonine 60, aspartate 80, 106 to 107 (DV), and serine 123.

Belongs to the class I-like SAM-binding methyltransferase superfamily. MenG/UbiE family.

It catalyses the reaction a 2-demethylmenaquinol + S-adenosyl-L-methionine = a menaquinol + S-adenosyl-L-homocysteine + H(+). The catalysed reaction is a 2-methoxy-6-(all-trans-polyprenyl)benzene-1,4-diol + S-adenosyl-L-methionine = a 5-methoxy-2-methyl-3-(all-trans-polyprenyl)benzene-1,4-diol + S-adenosyl-L-homocysteine + H(+). It participates in quinol/quinone metabolism; menaquinone biosynthesis; menaquinol from 1,4-dihydroxy-2-naphthoate: step 2/2. Its pathway is cofactor biosynthesis; ubiquinone biosynthesis. Its function is as follows. Methyltransferase required for the conversion of demethylmenaquinol (DMKH2) to menaquinol (MKH2) and the conversion of 2-polyprenyl-6-methoxy-1,4-benzoquinol (DDMQH2) to 2-polyprenyl-3-methyl-6-methoxy-1,4-benzoquinol (DMQH2). This Bdellovibrio bacteriovorus (strain ATCC 15356 / DSM 50701 / NCIMB 9529 / HD100) protein is Ubiquinone/menaquinone biosynthesis C-methyltransferase UbiE.